A 283-amino-acid polypeptide reads, in one-letter code: Homeobox protein six1a (283 aa).

A DNA-binding region (homeobox) is located at residues 124–183 (GEETSYCFKEKSRSVLREWYTHNPYPSPREKRELAEATGLTTTQVSNWFKNRRQRDRAAE). The interval 168-264 (VSNWFKNRRQ…PLHGMQGHPH (97 aa)) is disordered. The span at 179–190 (DRAAEAKERENG) shows a compositional bias: basic and acidic residues. Residues 237–248 (MNNPAAPAYPMP) show a composition bias toward low complexity.

This sequence belongs to the SIX/Sine oculis homeobox family.

The protein localises to the nucleus. It is found in the cytoplasm. Transcription factor that is involved in the regulation of cell proliferation, apoptosis and embryonic development. Depending on context, functions as a transcriptional repressor or activator. Plays an important role in the development of the inner ear, where it promotes hair cell proliferation and inhibits proliferation of neural progenitor cells. Required for normal myogenesis. Plays a role in the development of fast muscle fibers throughout the body, as well as the development of craniofacial muscles. The protein is Homeobox protein six1a (six1a) of Danio rerio (Zebrafish).